Here is a 446-residue protein sequence, read N- to C-terminus: Tubulin beta chain (446 aa).

Positions 11, 69, 138, 142, 143, 144, 204, and 226 each coordinate GTP. Glu-69 contributes to the Mg(2+) binding site. A disordered region spans residues 425–446; the sequence is YQEASISEGEEEYPEEVSNEEE. Positions 432–446 are enriched in acidic residues; the sequence is EGEEEYPEEVSNEEE.

It belongs to the tubulin family. As to quaternary structure, dimer of alpha and beta chains. A typical microtubule is a hollow water-filled tube with an outer diameter of 25 nm and an inner diameter of 15 nM. Alpha-beta heterodimers associate head-to-tail to form protofilaments running lengthwise along the microtubule wall with the beta-tubulin subunit facing the microtubule plus end conferring a structural polarity. Microtubules usually have 13 protofilaments but different protofilament numbers can be found in some organisms and specialized cells. The cofactor is Mg(2+).

Its subcellular location is the cytoplasm. The protein localises to the cytoskeleton. Its function is as follows. Tubulin is the major constituent of microtubules, a cylinder consisting of laterally associated linear protofilaments composed of alpha- and beta-tubulin heterodimers. Microtubules grow by the addition of GTP-tubulin dimers to the microtubule end, where a stabilizing cap forms. Below the cap, tubulin dimers are in GDP-bound state, owing to GTPase activity of alpha-tubulin. The protein is Tubulin beta chain (TUB2) of Blumeria hordei (Barley powdery mildew).